The following is a 157-amino-acid chain: Ribosomal RNA large subunit methyltransferase H (157 aa).

S-adenosyl-L-methionine contacts are provided by residues L73, G104, and L121–L126.

It belongs to the RNA methyltransferase RlmH family. Homodimer.

Its subcellular location is the cytoplasm. It carries out the reaction pseudouridine(1915) in 23S rRNA + S-adenosyl-L-methionine = N(3)-methylpseudouridine(1915) in 23S rRNA + S-adenosyl-L-homocysteine + H(+). Functionally, specifically methylates the pseudouridine at position 1915 (m3Psi1915) in 23S rRNA. In Acidithiobacillus ferrooxidans (strain ATCC 23270 / DSM 14882 / CIP 104768 / NCIMB 8455) (Ferrobacillus ferrooxidans (strain ATCC 23270)), this protein is Ribosomal RNA large subunit methyltransferase H.